The following is a 323-amino-acid chain: D-specific alpha-keto acid dehydrogenase (323 aa).

NAD(+)-binding positions include 157–158 (HI), 230–232 (TGR), and Asp-256. Residue Arg-232 is part of the active site. Glu-261 is an active-site residue. His-293 serves as the catalytic Proton donor. An NAD(+)-binding site is contributed by 293 to 296 (HTAY).

The protein belongs to the D-isomer specific 2-hydroxyacid dehydrogenase family.

Functionally, required for high-level resistance to glycopeptides antibiotics. Catalyzes the reduction of 2-keto acids to 2-D-hydroxy acids that give rise to peptidoglycan precursors that terminate in the depsipeptide D-alanine-2-lactate rather than the dipeptide D-alanine-D-alanine thus preventing vancomycin binding. This chain is D-specific alpha-keto acid dehydrogenase (vanHB), found in Enterococcus faecalis (strain ATCC 700802 / V583).